The primary structure comprises 443 residues: MIMMTRFAPSPTGYLHVGNVRTALICWLYTRSKQGRFLLRFDDTDLQRSKDDYRNEIANDLKWLQMDWDFDVRQSSRFDRYDEIFNYLLKEELIYPCYESKEELDFKRKMQLKLGLPPIYDRSALKLTQDEKNKYSERDVYFRFKIDQSQLISWDDEIRGKVSFNAANISDPIVKRADGTYTYMLPSVIDDIDFDITHIVRGEDHISNTAIQIQMFNALKASVPTFSHLSLLYCDDNKISKRVGGFSIKDMQFYELEPMAINSYFAKIGTSDPIVVHTKIQDLIYTFDITKFNQAPTQFNIDDVIKLNPKVLHKMSFSDVKLRLSELNITSPDLWDFVSGNVQKFSDIKEWIRICGQTTVPVINESDQDFIKMALSVFPNGEINQDTWKTWVANIKEKTDRKSKDIFIPLRLALTGISTGPELAKLLPILGRAEIIRRLGYSR.

Residues 9-19 carry the 'HIGH' region motif; sequence PSPTGYLHVGN. Positions 238–242 match the 'KMSKS' region motif; the sequence is KISKR. Lysine 241 is a binding site for ATP.

This sequence belongs to the class-I aminoacyl-tRNA synthetase family. Glutamate--tRNA ligase type 1 subfamily. In terms of assembly, monomer.

It is found in the cytoplasm. It carries out the reaction tRNA(Glu) + L-glutamate + ATP = L-glutamyl-tRNA(Glu) + AMP + diphosphate. In terms of biological role, catalyzes the attachment of glutamate to tRNA(Glu) in a two-step reaction: glutamate is first activated by ATP to form Glu-AMP and then transferred to the acceptor end of tRNA(Glu). This is Glutamate--tRNA ligase 1 from Ehrlichia ruminantium (strain Welgevonden).